We begin with the raw amino-acid sequence, 154 residues long: SsrA-binding protein (154 aa).

Belongs to the SmpB family.

The protein resides in the cytoplasm. Its function is as follows. Required for rescue of stalled ribosomes mediated by trans-translation. Binds to transfer-messenger RNA (tmRNA), required for stable association of tmRNA with ribosomes. tmRNA and SmpB together mimic tRNA shape, replacing the anticodon stem-loop with SmpB. tmRNA is encoded by the ssrA gene; the 2 termini fold to resemble tRNA(Ala) and it encodes a 'tag peptide', a short internal open reading frame. During trans-translation Ala-aminoacylated tmRNA acts like a tRNA, entering the A-site of stalled ribosomes, displacing the stalled mRNA. The ribosome then switches to translate the ORF on the tmRNA; the nascent peptide is terminated with the 'tag peptide' encoded by the tmRNA and targeted for degradation. The ribosome is freed to recommence translation, which seems to be the essential function of trans-translation. The chain is SsrA-binding protein from Treponema denticola (strain ATCC 35405 / DSM 14222 / CIP 103919 / JCM 8153 / KCTC 15104).